The sequence spans 456 residues: Gamma-aminobutyric acid receptor subunit alpha-1 (456 aa).

An N-terminal signal peptide occupies residues 1-27; sequence MRKSPGLSDCLWAWILLLSTLTGRSYG. The Extracellular portion of the chain corresponds to 28-253; the sequence is QPSLQDELKD…FHLKRKIGYF (226 aa). N38 carries an N-linked (GlcNAc...) asparagine glycan. R94 contributes to the 4-aminobutanoate binding site. N-linked (GlcNAc...) asparagine glycosylation occurs at N138. T157 serves as a coordination point for 4-aminobutanoate. An intrachain disulfide couples C166 to C180. A helical membrane pass occupies residues 254 to 274; that stretch reads VIQTYLPCIMTVILSQVSFWL. Position 273 (W273) interacts with 3alpha-hydroxy-5alpha-pregnan-11,20-dione. Over 275-279 the chain is Cytoplasmic; the sequence is NRESV. Residues 280–301 form a helical membrane-spanning segment; sequence PARTVFGVTTVLTMTTLSISAR. The Extracellular segment spans residues 302–311; sequence NSLPKVAYAT. The chain crosses the membrane as a helical span at residues 312-333; the sequence is AMDWFIAVCYAFVFSALIEFAT. At 334-421 the chain is on the cytoplasmic side; the sequence is VNYFTKRGYA…TFNSVSKIDR (88 aa). The helical transmembrane segment at 422-441 threads the bilayer; that stretch reads LSRIAFPLLFGIFNLVYWAT. Topologically, residues 442-456 are extracellular; sequence YLNREPQLKAPTPHQ.

It belongs to the ligand-gated ion channel (TC 1.A.9) family. Gamma-aminobutyric acid receptor (TC 1.A.9.5) subfamily. GABRA1 sub-subfamily. As to quaternary structure, heteropentamer, formed by a combination of alpha (GABRA1-6), beta (GABRB1-3), gamma (GABRG1-3), delta (GABRD), epsilon (GABRE), rho (GABRR1-3), pi (GABRP) and theta (GABRQ) subunits, each subunit exhibiting distinct physiological and pharmacological properties. Interacts with UBQLN1. Interacts with TRAK1. Interacts with KIF21B. Identified in a complex of 720 kDa composed of LHFPL4, NLGN2, GABRA1, GABRB2, GABRG2 and GABRB3. Interacts with LHFPL4. Interacts with NLGN2. Interacts with SHISA7; interaction leads regulation of GABAAR trafficking, channel deactivation kinetics and pharmacology.

The protein localises to the postsynaptic cell membrane. It localises to the cell membrane. The protein resides in the cytoplasmic vesicle membrane. It catalyses the reaction chloride(in) = chloride(out). Allosterically activated by benzodiazepines and the anesthetic alphaxalone. Allosterically activated by pentobarbital. Inhibited by the antagonist bicuculline. Potentiated by histamine. Functionally, alpha subunit of the heteropentameric ligand-gated chloride channel gated by Gamma-aminobutyric acid (GABA), a major inhibitory neurotransmitter in the brain. GABA-gated chloride channels, also named GABA(A) receptors (GABAAR), consist of five subunits arranged around a central pore and contain GABA active binding site(s) located at the alpha and beta subunit interface(s). When activated by GABA, GABAARs selectively allow the flow of chloride anions across the cell membrane down their electrochemical gradient. Alpha-1/GABRA1-containing GABAARs are largely synaptic. Chloride influx into the postsynaptic neuron following GABAAR opening decreases the neuron ability to generate a new action potential, thereby reducing nerve transmission. GABAARs containing alpha-1 and beta-2 or -3 subunits exhibit synaptogenic activity; the gamma-2 subunit being necessary but not sufficient to induce rapid synaptic contacts formation. GABAARs function also as histamine receptor where histamine binds at the interface of two neighboring beta subunits and potentiates GABA response. GABAARs containing alpha, beta and epsilon subunits also permit spontaneous chloride channel activity while preserving the structural information required for GABA-gated openings. Alpha-1-mediated plasticity in the orbitofrontal cortex regulates context-dependent action selection. Together with rho subunits, may also control neuronal and glial GABAergic transmission in the cerebellum. This chain is Gamma-aminobutyric acid receptor subunit alpha-1, found in Homo sapiens (Human).